The sequence spans 273 residues: Dermonecrotic toxin LhSicTox-alphaIA2ai (273 aa).

Residue histidine 5 is part of the active site. Residues glutamate 25 and aspartate 27 each contribute to the Mg(2+) site. Residue histidine 41 is the Nucleophile of the active site. Disulfide bonds link cysteine 45-cysteine 51 and cysteine 47-cysteine 190. Aspartate 85 is a Mg(2+) binding site.

It belongs to the arthropod phospholipase D family. Class II subfamily. The cofactor is Mg(2+). Expressed by the venom gland.

It is found in the secreted. It catalyses the reaction an N-(acyl)-sphingosylphosphocholine = an N-(acyl)-sphingosyl-1,3-cyclic phosphate + choline. The enzyme catalyses an N-(acyl)-sphingosylphosphoethanolamine = an N-(acyl)-sphingosyl-1,3-cyclic phosphate + ethanolamine. It carries out the reaction a 1-acyl-sn-glycero-3-phosphocholine = a 1-acyl-sn-glycero-2,3-cyclic phosphate + choline. The catalysed reaction is a 1-acyl-sn-glycero-3-phosphoethanolamine = a 1-acyl-sn-glycero-2,3-cyclic phosphate + ethanolamine. Dermonecrotic toxins cleave the phosphodiester linkage between the phosphate and headgroup of certain phospholipids (sphingolipid and lysolipid substrates), forming an alcohol (often choline) and a cyclic phosphate. This toxin acts on sphingomyelin (SM). It may also act on ceramide phosphoethanolamine (CPE), lysophosphatidylcholine (LPC) and lysophosphatidylethanolamine (LPE), but not on lysophosphatidylserine (LPS), and lysophosphatidylglycerol (LPG). It acts by transphosphatidylation, releasing exclusively cyclic phosphate products as second products. Induces dermonecrosis, hemolysis, increased vascular permeability, edema, inflammatory response, and platelet aggregation. The protein is Dermonecrotic toxin LhSicTox-alphaIA2ai of Loxosceles hirsuta (Recluse spider).